The chain runs to 140 residues: Nucleoside diphosphate kinase (140 aa).

Lys11, Phe59, Arg87, Thr93, Arg104, and Asn114 together coordinate ATP. The Pros-phosphohistidine intermediate role is filled by His117.

Belongs to the NDK family. In terms of assembly, homotetramer. Requires Mg(2+) as cofactor.

The protein localises to the cytoplasm. It carries out the reaction a 2'-deoxyribonucleoside 5'-diphosphate + ATP = a 2'-deoxyribonucleoside 5'-triphosphate + ADP. The catalysed reaction is a ribonucleoside 5'-diphosphate + ATP = a ribonucleoside 5'-triphosphate + ADP. Its function is as follows. Major role in the synthesis of nucleoside triphosphates other than ATP. The ATP gamma phosphate is transferred to the NDP beta phosphate via a ping-pong mechanism, using a phosphorylated active-site intermediate. This is Nucleoside diphosphate kinase from Rickettsia felis (strain ATCC VR-1525 / URRWXCal2) (Rickettsia azadi).